A 1032-amino-acid polypeptide reads, in one-letter code: Protein phosphatase 1 regulatory subunit 12A (1032 aa).

The KVKF motif motif lies at 35–38 (KVKF). ANK repeat units follow at residues 39–68 (DDGA…DINY), 72–101 (DGLT…NINQ), 105–134 (EGWI…HVGA), 138–164 (EGDT…RQGV), 198–227 (SGGT…DVNI), and 231–260 (DGWT…DMET). A (3S)-3-hydroxyasparagine; by HIF1AN mark is found at Asn-67 and Asn-100. Asn-226 bears the (3S)-3-hydroxyasparagine; by HIF1AN mark. Disordered regions lie at residues 290–553 (LHSE…HRSC) and 588–928 (SSTS…RLEK). A compositionally biased stretch (basic and acidic residues) spans 291-300 (HSEKRDKKSP). Position 299 is a phosphoserine (Ser-299). The span at 302–316 (IESTANMENNQPQKT) shows a compositional bias: polar residues. Residues 318 to 340 (KNKETLIIEPEKNASRIESLEQE) show a composition bias toward basic and acidic residues. A compositionally biased stretch (acidic residues) spans 357–369 (SEEDEEDDSESEA). Over residues 383–399 (AHTASTQAAPAAVTTPT) the composition is skewed to low complexity. Residues 400 to 421 (LSSNQGTPTSPVKKFPTSTTKI) are compositionally biased toward polar residues. Phosphoserine is present on residues Ser-422 and Ser-432. A compositionally biased stretch (basic and acidic residues) spans 422-432 (SPKEEERKDES). Phosphothreonine is present on Thr-443. A Phosphoserine modification is found at Ser-445. Tyr-446 carries the phosphotyrosine modification. Low complexity predominate over residues 469-480 (RSASSPRLSSSL). A Phosphoserine; by NUAK1 modification is found at Ser-472. Position 473 is a phosphoserine; by CDK1 (Ser-473). Residue Ser-477 is modified to Phosphoserine. Residues 481–491 (DNKEKEKDNKG) show a composition bias toward basic and acidic residues. Phosphoserine occurs at positions 507 and 509. The segment covering 540 to 551 (NSSINEGSTYHR) has biased composition (polar residues). Position 601 is a phosphoserine (Ser-601). Residues 602–612 (PAGTQSSTSNR) are compositionally biased toward polar residues. Over residues 614–625 (WAEDSTEKEKDS) the composition is skewed to basic and acidic residues. A Phosphoserine modification is found at Ser-618. Positions 633–661 (LVAPTVVSAAASSTTALTTTTAGTLSSTS) are enriched in low complexity. Residues 674-683 (VRDEESESQR) show a composition bias toward basic and acidic residues. The interval 683 to 866 (RKARSRQARQ…VSFWTQDSDE (184 aa)) is interaction with ROCK2. Over residues 684 to 694 (KARSRQARQSR) the composition is skewed to basic residues. Phosphoserine; by PKA and PKG; in vitro occurs at positions 693 and 696. Thr-697 carries the post-translational modification Phosphothreonine; by ROCK1, ROCK2, CDC42BP, ZIPK/DAPK3 and RAF1. The span at 719–768 (RTREQENEEKDKEEKEKQDKEKQEEKKESEVSREDEYKQKYSRTYDETYA) shows a compositional bias: basic and acidic residues. The span at 774–797 (STSSSSTPSSSSLSTLGSSLYASS) shows a compositional bias: low complexity. Polar residues predominate over residues 798-812 (QLNRPNSLVGITSAY). Ser-804 bears the Phosphoserine mark. The span at 816–842 (LTKDNEREGEKKEEEKEGEDKSQPKSI) shows a compositional bias: basic and acidic residues. Residues 843–854 (RERRRPREKRRS) are compositionally biased toward basic residues. Ser-854 is subject to Phosphoserine; by ROCK2. Phosphoserine is present on residues Ser-864 and Ser-873. A compositionally biased stretch (basic and acidic residues) spans 869–885 (QERQSDTEDGSSKRDTQ). Low complexity predominate over residues 886–900 (TDSVSRYDSSSTSSS). Residues Ser-905 and Ser-910 each carry the phosphoserine modification. A Phosphoserine; by NUAK1 modification is found at Ser-912. Over residues 916–928 (LEERKPYGSRLEK) the composition is skewed to basic and acidic residues. Ser-997 carries the post-translational modification Phosphoserine.

As to quaternary structure, PP1 comprises a catalytic subunit, PPP1CA, PPP1CB or PPP1CC, and one or several targeting or regulatory subunits. PPP1R12A mediates binding to myosin. Interacts with ARHA and CIT. Binds PPP1R12B, ROCK1 and IL16. Interacts directly with PRKG1. Non-covalent dimer of 2 dimers; PRKG1-PRKG1 and PPP1R12A-PPP1R12A. Interacts with SMTNL1. Interacts with PPP1CB; the interaction is direct. Interacts (when phosphorylated at Ser-445, Ser-472 and Ser-910) with 14-3-3. Interacts with ROCK1 and ROCK2. Interacts with isoform 1 and isoform 2 of ZIPK/DAPK3. Interacts with RAF1. Interacts with HIF1AN. Interacts with NCKAP1L. Phosphorylated on upon DNA damage, probably by ATM or ATR. Phosphorylated by CIT (Rho-associated kinase). Phosphorylated cooperatively by ROCK1 and CDC42BP on Thr-697. In vitro, phosphorylation of Ser-696 by PKA and PKG appears to prevent phosphorylation of the inhibitory site Thr-697, probably mediated by PRKG1. May be phosphorylated at Thr-697 by DMPK; may inhibit the myosin phosphatase activity. Phosphorylated at Ser-473 by CDK1 during mitosis, creating docking sites for the POLO box domains of PLK1. Subsequently, PLK1 binds and phosphorylates PPP1R12A. Smooth muscle. Detected in aorta, portal vein, stomach, intestine, bladder and lung.

The protein localises to the cytoplasm. It localises to the cytoskeleton. Its subcellular location is the stress fiber. Functionally, key regulator of protein phosphatase 1C (PPP1C). Mediates binding to myosin. As part of the PPP1C complex, involved in dephosphorylation of PLK1. Capable of inhibiting HIF1AN-dependent suppression of HIF1A activity. This is Protein phosphatase 1 regulatory subunit 12A from Rattus norvegicus (Rat).